Consider the following 567-residue polypeptide: Myo-inositol transporter 1 (567 aa).

The Cytoplasmic portion of the chain corresponds to Met-1–Ala-88. The interval Ile-14–Leu-42 is disordered. Over residues Thr-16–Ala-33 the composition is skewed to polar residues. A helical transmembrane segment spans residues Ala-89 to Ile-109. Residues Lys-110–Glu-123 lie on the Extracellular side of the membrane. Residues Val-124–Ser-144 form a helical membrane-spanning segment. Topologically, residues Asp-145 to Arg-150 are cytoplasmic. The helical transmembrane segment at Leu-151–His-171 threads the bilayer. Topologically, residues Thr-172–Arg-180 are extracellular. A helical membrane pass occupies residues Phe-181–Leu-201. Residues Ala-202–Arg-209 lie on the Cytoplasmic side of the membrane. Residues Leu-210–Ala-230 traverse the membrane as a helical segment. The Extracellular portion of the chain corresponds to Ser-231–Arg-240. The chain crosses the membrane as a helical span at residues Trp-241 to Pro-261. The Cytoplasmic segment spans residues Glu-262–Gln-343. A helical membrane pass occupies residues Leu-344 to Asn-364. N-linked (GlcNAc...) asparagine glycosylation is present at Asn-365. Residues Asn-365 to Thr-367 are Extracellular-facing. Residues Ala-368–Val-388 traverse the membrane as a helical segment. The Cytoplasmic segment spans residues Asp-389–Met-397. The helical transmembrane segment at Leu-398–Leu-418 threads the bilayer. The Extracellular portion of the chain corresponds to Thr-419 to Ser-435. Residues Leu-436–Gly-456 form a helical membrane-spanning segment. The Cytoplasmic portion of the chain corresponds to Asn-457–Ser-476. The chain crosses the membrane as a helical span at residues Ile-477–Met-497. Residues Asp-498 to Ser-503 are Extracellular-facing. A helical transmembrane segment spans residues Gly-504–Tyr-524. The Cytoplasmic portion of the chain corresponds to Pro-525–Glu-567.

The protein belongs to the major facilitator superfamily. Sugar transporter (TC 2.A.1.1) family.

The protein resides in the cell membrane. The catalysed reaction is myo-inositol(out) + H(+)(out) = myo-inositol(in) + H(+)(in). In terms of biological role, may function as a transporter or as a sensor for myo-inositol. The chain is Myo-inositol transporter 1 from Cryptococcus neoformans var. grubii serotype A (strain H99 / ATCC 208821 / CBS 10515 / FGSC 9487) (Filobasidiella neoformans var. grubii).